The chain runs to 124 residues: Small ribosomal subunit protein uS11 (124 aa).

This sequence belongs to the universal ribosomal protein uS11 family. As to quaternary structure, part of the 30S ribosomal subunit. Interacts with proteins S7 and S18. Binds to IF-3.

In terms of biological role, located on the platform of the 30S subunit, it bridges several disparate RNA helices of the 16S rRNA. Forms part of the Shine-Dalgarno cleft in the 70S ribosome. This chain is Small ribosomal subunit protein uS11, found in Anaplasma marginale (strain St. Maries).